Consider the following 536-residue polypeptide: Copine-1 (536 aa).

C2 domains follow at residues 1 to 113 (MAHC…TLPL) and 122 to 244 (GRGT…ECIH). 7 residues coordinate Ca(2+): aspartate 21, aspartate 27, aspartate 79, aspartate 81, aspartate 91, aspartate 152, and aspartate 158. At lysine 170 the chain carries N6-acetyllysine. Positions 213, 215, and 221 each coordinate Ca(2+). The 203-residue stretch at 282-484 (QINFTVGVDF…AARDIVQFVP (203 aa)) folds into the VWFA domain.

Belongs to the copine family. As to quaternary structure, homodimer; homodimerizes via its C2 domains. Interacts with p65/RELA (via N-terminus); this interaction induces proteolytic cleavage of p65/RELA subunit and inhibition of NF-kappa-B transcriptional activity. Interacts (via VWFA domain) with ACTB, CCDC22, MYCBP2, PPP5C, RDX and UBE2O. Ca(2+) serves as cofactor. As to expression, expressed in liver, brain, heart, intestine, kidney and lung (at protein level).

It is found in the nucleus. Its subcellular location is the cytoplasm. The protein localises to the cell membrane. Calcium-dependent phospholipid-binding protein that plays a role in calcium-mediated intracellular processes. Involved in the TNF-alpha receptor signaling pathway in a calcium-dependent manner. Exhibits calcium-dependent phospholipid binding properties. Plays a role in neuronal progenitor cell differentiation; induces neurite outgrowth via a AKT-dependent signaling cascade and calcium-independent manner. May recruit target proteins to the cell membrane in a calcium-dependent manner. May function in membrane trafficking. Involved in TNF-alpha-induced NF-kappa-B transcriptional repression by inducing endoprotease processing of the transcription factor NF-kappa-B p65/RELA subunit. Also induces endoprotease processing of NF-kappa-B p50/NFKB1, p52/NFKB2, RELB and REL. The sequence is that of Copine-1 from Rattus norvegicus (Rat).